The chain runs to 137 residues: Putative pre-16S rRNA nuclease (137 aa).

Belongs to the YqgF nuclease family.

The protein resides in the cytoplasm. In terms of biological role, could be a nuclease involved in processing of the 5'-end of pre-16S rRNA. This is Putative pre-16S rRNA nuclease from Bacillus cereus (strain AH187).